A 159-amino-acid polypeptide reads, in one-letter code: Sumo-conjugating enzyme ubc9 (159 aa).

The UBC core domain occupies 4-157 (ISSARLSEER…VKAQSKVYPP (154 aa)). Cys93 acts as the Glycyl thioester intermediate in catalysis.

The protein belongs to the ubiquitin-conjugating enzyme family.

Its subcellular location is the nucleus. The protein operates within protein modification; protein sumoylation. In terms of biological role, accepts the ubiquitin-like protein sumo from the E1 complex and catalyzes its covalent attachment to other proteins with the help of an E3 ligase. The polypeptide is Sumo-conjugating enzyme ubc9 (ubc9) (Dictyostelium discoideum (Social amoeba)).